The chain runs to 150 residues: Nitric oxide reductase subunit C (150 aa).

The chain crosses the membrane as a helical; Signal-anchor span at residues 13–29 (VFYGGSIFFILIFGALT). Residues cysteine 62, cysteine 65, and histidine 66 each coordinate heme c.

As to quaternary structure, heterodimer of cytochromes b (large subunit) and c (small subunit).

The protein localises to the cell membrane. Its function is as follows. Component of the anaerobic respiratory chain that transforms nitrate to dinitrogen (denitrification). This Paracoccus denitrificans protein is Nitric oxide reductase subunit C (norC).